The sequence spans 110 residues: Insulin (110 aa).

An N-terminal signal peptide occupies residues 1-24 (MALWMHLLTVLALLALWGPNTGQA). 3 disulfide bridges follow: Cys-31–Cys-96, Cys-43–Cys-109, and Cys-95–Cys-100. Residues 57–87 (ELEDPQVEQTELGMGLGAGGLQPLALEMALQ) constitute a propeptide, c peptide.

It belongs to the insulin family. As to quaternary structure, heterodimer of a B chain and an A chain linked by two disulfide bonds.

The protein localises to the secreted. Its function is as follows. Insulin decreases blood glucose concentration. It increases cell permeability to monosaccharides, amino acids and fatty acids. It accelerates glycolysis, the pentose phosphate cycle, and glycogen synthesis in liver. In Cavia porcellus (Guinea pig), this protein is Insulin (INS).